A 36-amino-acid chain; its full sequence is Mu/kappa-theraphotoxin-Ap1a (36 aa).

3 cysteine pairs are disulfide-bonded: cysteine 3–cysteine 18, cysteine 10–cysteine 23, and cysteine 17–cysteine 30. Phenylalanine 36 is subject to Phenylalanine amide.

The protein belongs to the neurotoxin 10 (Hwtx-1) family. In terms of tissue distribution, expressed by the venom gland.

Its subcellular location is the secreted. Functionally, inhibitor of voltage-gated potassium and sodium channels. Among other potassium channels, it selectively inhibits Kv10.1/KCNH1/EAG1 (IC(50)=236 nM) by shifting the voltage dependence of channel activation in a depolarising direction, it shows a maximum inhibition of 80% at saturating concentrations, it shows fast on-rates, and is poorly reversible. It also slightly affects channel inactivation, when the membrane is highly depolarised (&gt;+80 mV). It shows similar potency on Nav1.7/SCN9A (IC(50)=222 nM) and lower potency on Nav1.2/SCN2A (IC(50)=519 nM). This chain is Mu/kappa-theraphotoxin-Ap1a, found in Avicularia purpurea (Ecuadorian purple pinktoe tarantula).